The primary structure comprises 181 residues: Adenylyl-sulfate kinase (181 aa).

ATP is bound at residue 12 to 19 (GLSGAGKS). Residue Ser86 is the Phosphoserine intermediate of the active site.

Belongs to the APS kinase family.

The enzyme catalyses adenosine 5'-phosphosulfate + ATP = 3'-phosphoadenylyl sulfate + ADP + H(+). The protein operates within sulfur metabolism; hydrogen sulfide biosynthesis; sulfite from sulfate: step 2/3. In terms of biological role, catalyzes the synthesis of activated sulfate. The sequence is that of Adenylyl-sulfate kinase from Microcystis aeruginosa (strain NIES-843 / IAM M-2473).